Here is a 213-residue protein sequence, read N- to C-terminus: TVP38/TMEM64 family membrane protein YtxB (213 aa).

The next 6 helical transmembrane spans lie at 9–29 (WLAV…YLNV), 34–54 (IRVW…GISI), 58–78 (LVLF…GPLL), 81–101 (LYTL…AGLF), 159–179 (AVGI…FLAG), and 181–201 (LPAF…PFIF).

The protein belongs to the TVP38/TMEM64 family.

Its subcellular location is the cell membrane. The chain is TVP38/TMEM64 family membrane protein YtxB (ytxB) from Bacillus subtilis (strain 168).